Reading from the N-terminus, the 1034-residue chain is DNA polymerase I B, chloroplastic/mitochondrial (1034 aa).

A chloroplast and mitochondrion-targeting transit peptide spans 1–55 (MGVSLRHLSPSSFWVSRRPRVSSSILSFLVPRRRILCTRKVAIIKGNAGYSTATD). A 3'-5' exonuclease domain is found at 270 to 468 (ACDTEVSRID…LYESMKKQLQ (199 aa)). The tract at residues 700 to 1030 (HAIAALCEVC…SVDAKCAQNW (331 aa)) is polymerase.

This sequence belongs to the DNA polymerase type-A family. As to expression, expressed in shoot apical meristem.

The protein localises to the mitochondrion. It localises to the plastid. Its subcellular location is the chloroplast. The catalysed reaction is DNA(n) + a 2'-deoxyribonucleoside 5'-triphosphate = DNA(n+1) + diphosphate. With respect to regulation, not inhibited by aphidicolin. Its function is as follows. In addition to polymerase activity, this DNA polymerase exhibits 5'-3' exonuclease activity. Required for DNA replication and accumulation in plastids and mitochondria. The polypeptide is DNA polymerase I B, chloroplastic/mitochondrial (POLIB) (Arabidopsis thaliana (Mouse-ear cress)).